The primary structure comprises 317 residues: MPFTIDSARGIFPNTLAADVVPATIARFSQLNAEDQLALIWFAYLEMGKTLTIAAPGAASMQLAENALKEIQAMGPLQQTQAMCDLANRADTPLCRTYASWSPNIKLGFWYRLGELMEQGFVAPIPAGYQLSANANAVLATIQGLESGQQITVLRNAVVDMGFTAGKDGKRIAEPVVPPQDTASRTKVSIEGVTNATVLNYMDNLNANDFDTLIELFTSDGALQPPFQRPIVGKENVLRFFREECQNLKLIPERGVTEPAEDGFTQIKVTGKVQTPWFGGNVGMNIAWRFLLNPEGKIFFVAIDLLASPKELLNFAR.

Positions 18–169 (ADVVPATIAR…DMGFTAGKDG (152 aa)) constitute an OCP N-terminal domain. Residues 34–38 (EDQLA), 37–44 (LALIWFAY), 80–83 (TQAM), 107–117 (LGFWYRLGELM), 125–129 (IPAGY), 151–161 (ITVLRNAVVDM), Y201, 245–250 (CQNLKL), 273–284 (VQTPWFGGNVGM), and W288 each bind echinenone.

This sequence belongs to the orange carotenoid-binding protein family. Monomer. Interacts with the APC core of the phycobilisome (PB), probably at a ratio of 1:1 in a light-independent manner; possibly only OCP-R binds to PBs. Interacts with FRP. Detachment from PBs is accelerated by FPR. The cofactor is 3'-hydroxyechinenone. In terms of processing, proteolytically cleaved into a red 16.7 kDa form named red carotenoid-binding protein (RCP) which lacks 15 residues from the N-terminus and approximately 150 residues from the C-terminus.

The protein resides in the cellular thylakoid membrane. Acts as a blue-light photoreceptor and photo-protectant. Essential for inhibiting damaged induced by excess blue-green light via a process known as non-photochemical quenching (NPQ). In the dark or dim light the stable inactive form (OCP-O) is orange, upon illumination with blue-green light it converts to a metastable active red form (OCP-R), inducing energy dissipation, quenching cellular fluorescence via NPQ. One OCP-R molecule is sufficient to quench 1 phycobilisome. More OCP-R accumulates under high-light and low temperature; in the dark OCP-R spontaneously reverts to OCP-O. Reversion of OCP-O is accelerated by FRP. A kinetic study suggests conversion of OCP-O to OCP-R is limited by cis-trans proline isomerization of either Gln224-Pro225 or Pro225-Pro226. This is Orange carotenoid-binding protein from Synechocystis sp. (strain ATCC 27184 / PCC 6803 / Kazusa).